The sequence spans 666 residues: DNA ligase (666 aa).

NAD(+) contacts are provided by residues 34–38, 83–84, and Glu-114; these read DEEYD and SL. Lys-116 serves as the catalytic N6-AMP-lysine intermediate. Positions 137, 174, 290, and 314 each coordinate NAD(+). Positions 408, 411, 424, and 429 each coordinate Zn(2+). In terms of domain architecture, BRCT spans 584-666; that stretch reads SIEGPLKGLT…LKMVKREHNG (83 aa).

Belongs to the NAD-dependent DNA ligase family. LigA subfamily. The cofactor is Mg(2+). Mn(2+) serves as cofactor.

It catalyses the reaction NAD(+) + (deoxyribonucleotide)n-3'-hydroxyl + 5'-phospho-(deoxyribonucleotide)m = (deoxyribonucleotide)n+m + AMP + beta-nicotinamide D-nucleotide.. Its function is as follows. DNA ligase that catalyzes the formation of phosphodiester linkages between 5'-phosphoryl and 3'-hydroxyl groups in double-stranded DNA using NAD as a coenzyme and as the energy source for the reaction. It is essential for DNA replication and repair of damaged DNA. The sequence is that of DNA ligase from Coprothermobacter proteolyticus (strain ATCC 35245 / DSM 5265 / OCM 4 / BT).